Consider the following 278-residue polypeptide: UPF0276 protein Sama_1305 (278 aa).

It belongs to the UPF0276 family.

The chain is UPF0276 protein Sama_1305 from Shewanella amazonensis (strain ATCC BAA-1098 / SB2B).